A 297-amino-acid polypeptide reads, in one-letter code: Juvenile hormone acid O-methyltransferase (297 aa).

It belongs to the methyltransferase superfamily. In terms of tissue distribution, predominantly expressed in corpora allata. Also expressed at low level in testis.

It carries out the reaction (2E,6E)-farnesoate + S-adenosyl-L-methionine = methyl (2E,6E)-farnesoate + S-adenosyl-L-homocysteine. The catalysed reaction is juvenile hormone III carboxylate + S-adenosyl-L-methionine = juvenile hormone III + S-adenosyl-L-homocysteine. Functionally, O-methyltransferase that transfers a methyl group from S-adenosyl-L-methionine (SAM) to the carboxyl group of juvenile hormone acids to produce active juvenile hormones in the corpora allata, the last step during juvenile hormone biosynthesis. Also able to methylate farnesoate to methyl farnesoate. This is Juvenile hormone acid O-methyltransferase from Drosophila melanogaster (Fruit fly).